Consider the following 394-residue polypeptide: Elongation factor Tu (394 aa).

In terms of domain architecture, tr-type G spans 10 to 204 (RTHINVGTIG…ILDNYIPEPK (195 aa)). The interval 19–26 (GHVDHGKT) is G1. 19-26 (GHVDHGKT) contacts GTP. T26 provides a ligand contact to Mg(2+). Positions 60-64 (GITIN) are G2. The segment at 81-84 (DCPG) is G3. GTP contacts are provided by residues 81 to 85 (DCPGH) and 136 to 139 (NKCD). Positions 136-139 (NKCD) are G4. The tract at residues 174–176 (SAL) is G5.

Belongs to the TRAFAC class translation factor GTPase superfamily. Classic translation factor GTPase family. EF-Tu/EF-1A subfamily. Monomer.

It localises to the cytoplasm. It catalyses the reaction GTP + H2O = GDP + phosphate + H(+). GTP hydrolase that promotes the GTP-dependent binding of aminoacyl-tRNA to the A-site of ribosomes during protein biosynthesis. The sequence is that of Elongation factor Tu from Blochmanniella floridana.